Reading from the N-terminus, the 1969-residue chain is Myosin-3 (1969 aa).

Residues 33–82 (DSKKNCWIPDPEDGFVAAEIQSTTGDQVTVVTVKGNQITVKKDQCQEMNP) form the Myosin N-terminal SH3-like domain. In terms of domain architecture, Myosin motor spans 86–791 (DKTEDMANLT…VLAKLEDLRD (706 aa)). Lysine 130 bears the N6,N6,N6-trimethyllysine mark. Residue 179–186 (GESGAGKT) coordinates ATP. Actin-binding regions lie at residues 667–689 (LNNL…IPNE) and 770–784 (KIGE…GVLA). The 30-residue stretch at 794 to 823 (LSRIVTMFQSRIRSYLAKAEVRRRYEQQTG) folds into the IQ domain. Residues 853-1941 (LKAGKEQEAM…KMRNKIRASA (1089 aa)) adopt a coiled-coil conformation. Disordered stretches follow at residues 943 to 967 (QERH…KKHV), 993 to 1029 (DEMA…EEDK), and 1134 to 1153 (ELES…NELQ). Composition is skewed to basic and acidic residues over residues 1001–1029 (SVAK…EEDK) and 1137–1153 (SERN…NELQ).

Belongs to the TRAFAC class myosin-kinesin ATPase superfamily. Myosin family. In terms of assembly, muscle myosin is a hexameric protein that consists of 2 heavy chain subunits (MHC), 2 alkali light chain subunits (MLC) and 2 regulatory light chain subunits (MLC-2).

It is found in the cytoplasm. The protein resides in the myofibril. Its subcellular location is the sarcomere. The protein localises to the a band. Its function is as follows. Essential for muscle contraction. Involved in ovulation likely by regulating the contraction of gonadal myoepithelial sheath cells. The protein is Myosin-3 of Caenorhabditis briggsae.